The chain runs to 468 residues: Glutamate--tRNA ligase (468 aa).

5 to 7 (RIA) contacts L-glutamate. The 'HIGH' region signature appears at 8–18 (PSPTGDPHVGT). Position 15 (His15) interacts with ATP. L-glutamate is bound by residues Glu41, 187–191 (YHLAN), and Arg205. Residues Glu208, Leu236, 243 to 247 (KISKR), and Lys246 contribute to the ATP site. Residues 243–247 (KISKR) carry the 'KMSKS' region motif. An interaction with tRNA region spans residues 432 to 447 (QPLRAALTGSLETPGL).

The protein belongs to the class-I aminoacyl-tRNA synthetase family. Glutamate--tRNA ligase type 1 subfamily. Monomer.

The protein localises to the cytoplasm. It catalyses the reaction tRNA(Glu) + L-glutamate + ATP = L-glutamyl-tRNA(Glu) + AMP + diphosphate. In the absence of bound tRNA, ATP is bound in a non-productive mode, and the enzyme cannot activate amino acids. Catalyzes the attachment of glutamate to tRNA(Glu) in a two-step reaction: glutamate is first activated by ATP to form Glu-AMP and then transferred to the acceptor end of tRNA(Glu). The protein is Glutamate--tRNA ligase of Thermus thermophilus (strain ATCC 27634 / DSM 579 / HB8).